The sequence spans 171 residues: Spiderine-2a (171 aa).

The first 18 residues, 1-18 (MKFALVLLGVCAFYLVNA), serve as a signal peptide directing secretion. Positions 19 to 58 (TGDLETELEASELQELQEALDLIAETPLESLEAEELEEAR) are cleaved as a propeptide — removed in mature form. A linear cationic cytotoxin domain region spans residues 59–104 (KFKLPKINWGKLASKAKDVYKKGQKLAKNKNVKKALKYGKQLAENL). In terms of domain architecture, Oxytoxin-type inhibitor cystine knot (ICK) spans 118-171 (NNKCWAIGTRCTDDCDCCPEHHCHCPAKSWTFGLIPCSCQVTESDKVNKCPPAE). Intrachain disulfides connect Cys121-Cys135, Cys128-Cys140, Cys132-Cys167, Cys134-Cys156, and Cys142-Cys154.

Disulfide bonds. Expressed by the venom gland.

The protein localises to the secreted. Has antimicrobial, insecticidal, cytolytic and cytotoxic activity. The polypeptide is Spiderine-2a (Oxyopes takobius (Lynx spider)).